The sequence spans 231 residues: Small ribosomal subunit protein uS3 (231 aa).

In terms of domain architecture, KH type-2 spans 39 to 108 (IKNYIKKRYK…EISISVLEVK (70 aa)).

This sequence belongs to the universal ribosomal protein uS3 family. In terms of assembly, part of the 30S ribosomal subunit. Forms a tight complex with proteins S10 and S14.

Its function is as follows. Binds the lower part of the 30S subunit head. Binds mRNA in the 70S ribosome, positioning it for translation. This chain is Small ribosomal subunit protein uS3, found in Aquifex pyrophilus.